The chain runs to 104 residues: Urease subunit beta (104 aa).

Belongs to the urease beta subunit family. Heterotrimer of UreA (gamma), UreB (beta) and UreC (alpha) subunits. Three heterotrimers associate to form the active enzyme.

It localises to the cytoplasm. The catalysed reaction is urea + 2 H2O + H(+) = hydrogencarbonate + 2 NH4(+). It functions in the pathway nitrogen metabolism; urea degradation; CO(2) and NH(3) from urea (urease route): step 1/1. The protein is Urease subunit beta of Rhodococcus jostii (strain RHA1).